Here is a 1061-residue protein sequence, read N- to C-terminus: Zinc finger protein ZFPM1 (1061 aa).

The CCHC FOG-type 1 zinc-finger motif lies at valine 152–glutamine 185. Cysteine 160, cysteine 163, histidine 176, and cysteine 181 together coordinate Zn(2+). 3 consecutive C2H2-type zinc fingers follow at residues arginine 204 to histidine 228, phenylalanine 234 to histidine 256, and glycine 262 to histidine 285. Disordered stretches follow at residues proline 349–threonine 393 and threonine 435–threonine 455. The span at serine 378–serine 388 shows a compositional bias: low complexity. Residues glutamate 436–proline 448 are compositionally biased toward polar residues. A CCHC FOG-type 2 zinc finger spans residues serine 508–histidine 541. Zn(2+) is bound by residues cysteine 516, cysteine 519, histidine 532, and cysteine 537. Disordered regions lie at residues alanine 561–alanine 586 and methionine 599–valine 630. Residues glycine 565–serine 574 are compositionally biased toward polar residues. The segment at glutamate 623 to histidine 656 adopts a CCHC FOG-type 3 zinc-finger fold. Zn(2+) is bound by residues cysteine 631, cysteine 634, histidine 647, and cysteine 652. Positions arginine 661–arginine 681 are disordered. Residues proline 736–lysine 742 form an interaction with CTBP region. A CCHC FOG-type 4 zinc finger spans residues alanine 759–proline 792. Zn(2+) is bound by residues cysteine 767, cysteine 770, histidine 783, and cysteine 788. The C2H2-type 4 zinc finger occupies threonine 869–histidine 892. Residues arginine 917–serine 1021 form a disordered region. 2 stretches are compositionally biased toward low complexity: residues valine 933–proline 942 and threonine 954–arginine 972. The segment covering proline 973–asparagine 984 has biased composition (pro residues). The segment at valine 1023–alanine 1056 adopts a CCHC FOG-type 5 zinc-finger fold. 4 residues coordinate Zn(2+): cysteine 1031, cysteine 1034, histidine 1047, and cysteine 1052.

This sequence belongs to the FOG (Friend of GATA) family. Interacts with corepressor CTBP. Interacts with the N-terminal zinc-finger of GATA1 and probably GATA2. Predominantly expressed in heart and brain. Also expressed in ventral blood island and adult spleen.

Its subcellular location is the nucleus. Transcription regulator that plays an central role in red blood cell differentiation. Essential cofactor that acts via the formation of a heterodimer with transcription factors of the GATA family GATA1 and GATA2. Such heterodimer can both activate or repress transcriptional activity, depending on the cell and promoter context. Acts as a repressor of red blood cells, probably by modulating activity of GATA1. The protein is Zinc finger protein ZFPM1 (zfpm1) of Xenopus laevis (African clawed frog).